The following is a 149-amino-acid chain: Limonene-1,2-epoxide hydrolase (149 aa).

The active-site Proton donor is the Asp101. Catalysis depends on Asp132, which acts as the Proton acceptor.

The protein belongs to the limonene-1,2-epoxide hydrolase family. Monomer.

The catalysed reaction is limonene 1,2-epoxide + H2O = limonene-1,2-diol. The protein operates within terpene metabolism; (4R)-limonene degradation; (1S,4R)-1-hydroxylimonen-2-one from (4R)-limonene: step 2/3. Its function is as follows. Catalyzes the conversion of limonene-1,2-epoxide to limonene-1,2-diol. Can use both the (-) and (+) isomers of limonene-1,2-epoxide as substrates and also has some activity with 1-methylcyclohexene oxide, cyclohexene oxide and indene oxide as substrates. The chain is Limonene-1,2-epoxide hydrolase (limA) from Rhodococcus erythropolis (Arthrobacter picolinophilus).